The chain runs to 359 residues: Dihydroorotate dehydrogenase (quinone) (359 aa).

Residues 68–72 and alanine 92 contribute to the FMN site; that span reads AGFDK. Residue lysine 72 coordinates substrate. Substrate is bound at residue 117–121; sequence NAYGF. FMN is bound by residues asparagine 146 and asparagine 179. Residue asparagine 179 participates in substrate binding. Residue serine 182 is the Nucleophile of the active site. Asparagine 184 serves as a coordination point for substrate. Positions 215 and 243 each coordinate FMN. Residue 244–245 coordinates substrate; sequence NT. Residues glycine 263, glycine 292, and 313–314 each bind FMN; that span reads YT.

The protein belongs to the dihydroorotate dehydrogenase family. Type 2 subfamily. In terms of assembly, monomer. FMN is required as a cofactor.

The protein localises to the cell membrane. The catalysed reaction is (S)-dihydroorotate + a quinone = orotate + a quinol. Its pathway is pyrimidine metabolism; UMP biosynthesis via de novo pathway; orotate from (S)-dihydroorotate (quinone route): step 1/1. Its function is as follows. Catalyzes the conversion of dihydroorotate to orotate with quinone as electron acceptor. The polypeptide is Dihydroorotate dehydrogenase (quinone) (Nautilia profundicola (strain ATCC BAA-1463 / DSM 18972 / AmH)).